The chain runs to 288 residues: MNTYLDLCRFIFQKGSFRKDRTNTGTKSVFGYQMRFNLEEGFPLLTTKKMNLRSIIHELLWFLKGDTNIFYLVQNNVNIWNEWPYQKYQQSDFFQNETLKEFVKKIKNDPLFATKHGNLGPVYGKQWRDFNGVDQIKFLISEIKANPNSRRLILNSWNPSLLNQMALPPCHVLIQFYVHQGKLSLQLYQRSGDVFLGIPFNIASYSLLLMMVAQVTNLQPYEFIHTLGDAHIYSNHITQVQTQIQRTPKKLPQMILNPDIKNIDDFKFIDFILKNYQCDGILKGDIAV.

A dUMP-binding site is contributed by arginine 21. Asparagine 51 lines the (6R)-5,10-methylene-5,6,7,8-tetrahydrofolate pocket. 150–151 (RR) is a dUMP binding site. Catalysis depends on cysteine 170, which acts as the Nucleophile. DUMP contacts are provided by residues 190-193 (RSGD), asparagine 201, and 231-233 (HIY). Aspartate 193 lines the (6R)-5,10-methylene-5,6,7,8-tetrahydrofolate pocket. Position 287 (alanine 287) interacts with (6R)-5,10-methylene-5,6,7,8-tetrahydrofolate.

It belongs to the thymidylate synthase family. Bacterial-type ThyA subfamily. Homodimer.

The protein resides in the cytoplasm. It carries out the reaction dUMP + (6R)-5,10-methylene-5,6,7,8-tetrahydrofolate = 7,8-dihydrofolate + dTMP. It functions in the pathway pyrimidine metabolism; dTTP biosynthesis. Functionally, catalyzes the reductive methylation of 2'-deoxyuridine-5'-monophosphate (dUMP) to 2'-deoxythymidine-5'-monophosphate (dTMP) while utilizing 5,10-methylenetetrahydrofolate (mTHF) as the methyl donor and reductant in the reaction, yielding dihydrofolate (DHF) as a by-product. This enzymatic reaction provides an intracellular de novo source of dTMP, an essential precursor for DNA biosynthesis. The polypeptide is Thymidylate synthase (Aster yellows witches'-broom phytoplasma (strain AYWB)).